The sequence spans 463 residues: Zinc finger protein interacting with ribonucleoprotein K (463 aa).

The 76-residue stretch at 14–89 (VTFQDVAICF…PKTNLCEKCV (76 aa)) folds into the KRAB domain. Disordered regions lie at residues 106 to 128 (HSTE…KPLE) and 171 to 211 (KYRK…TSNG). A compositionally biased stretch (basic and acidic residues) spans 174–191 (KSTEGRKETSHESDKSEE). Residues 192 to 201 (CQSLSSQKQT) are compositionally biased toward polar residues. 9 C2H2-type zinc fingers span residues 215–237 (YECS…QRVH), 243–265 (WECR…RRIH), 271–293 (YECS…QKTH), 299–321 (YECS…KRVH), 327–349 (YKCS…RRIH), 355–377 (YECR…QRVH), 383–405 (YKCS…RRIH), 411–433 (YECS…QVVH), and 439–461 (YECD…QKCH).

Belongs to the krueppel C2H2-type zinc-finger protein family. As to quaternary structure, interacts with HNRPK. Expressed in ovary and liver, and at lower levels in brain and muscle.

It is found in the nucleus. Its function is as follows. May be a transcriptional repressor. In Mus musculus (Mouse), this protein is Zinc finger protein interacting with ribonucleoprotein K (Zik1).